The chain runs to 628 residues: MEEFPCDVIRYEAYVYGVCEFRLPFFLPSRNFSIIAHIDHGKSTLADRLLELTGTIQKKQAGKNEQVLDKLKVERERGITGKSNHSMIDKFKGKDYLLNLIDTPGHVDFAWEVSRSLAACQGALLLVDASQGVQAQSISVFHNAKERGLKIIPILNKIDLPAAQPERIAAQMQATFGIDPSDILHISAKTGQGTQEVLEAIISRIPPPSGRIHAPLKAFLFDSFYDRYRGVISLINVQEGVLRKGDKISSCHTRKKYEITELGILHPEEVPTQSLNPGQVGYIACNMKQSSEAHIGDTLHRAGEPVEPMEGFQETKAMVFAGVFPVDNSDFPKLEESINRLTLTDRSVTIQRESSSALGQGCRLGFLGTLHMDVFRQRLEDEYDANIIITAPTVPYKVVYHDREVIISNPTEFPEVTDATARVKEIQEPVVKASIIVPEEYFGDLMELCYSHRAEDLDHRYLDSGAVSSRIMLNCILPLSEIVTDFFDQLKSRSSGFASFDYEDAGYRKSDLAKMSFLLNGKPVDALALIIHRSAQEAVGRQWVKKLHKVIPRQLYEVPIQAAIGKKVIARETLKAMRADVTAGLYGGHYERKMKHLENQKEGKRKMKKMGTIDLPQEAFFDILSNKS.

In terms of domain architecture, tr-type G spans 27-209; that stretch reads LPSRNFSIIA…AIISRIPPPS (183 aa). Residues 36-43, 102-106, and 156-159 each bind GTP; these read AHIDHGKS, DTPGH, and NKID.

The protein belongs to the TRAFAC class translation factor GTPase superfamily. Classic translation factor GTPase family. LepA subfamily.

It localises to the mitochondrion inner membrane. It catalyses the reaction GTP + H2O = GDP + phosphate + H(+). In terms of biological role, promotes mitochondrial protein synthesis. May act as a fidelity factor of the translation reaction, by catalyzing a one-codon backward translocation of tRNAs on improperly translocated ribosomes. Binds to mitochondrial ribosomes in a GTP-dependent manner. In Laccaria bicolor (strain S238N-H82 / ATCC MYA-4686) (Bicoloured deceiver), this protein is Translation factor GUF1, mitochondrial.